Consider the following 109-residue polypeptide: Large ribosomal subunit protein uL23 (109 aa).

It belongs to the universal ribosomal protein uL23 family. Part of the 50S ribosomal subunit. Contacts protein L29, and trigger factor when it is bound to the ribosome.

Its function is as follows. One of the early assembly proteins it binds 23S rRNA. One of the proteins that surrounds the polypeptide exit tunnel on the outside of the ribosome. Forms the main docking site for trigger factor binding to the ribosome. The chain is Large ribosomal subunit protein uL23 from Chlorobium phaeobacteroides (strain BS1).